Consider the following 149-residue polypeptide: Endoribonuclease YbeY (149 aa).

Residues His115, His119, and His125 each contribute to the Zn(2+) site.

This sequence belongs to the endoribonuclease YbeY family. Zn(2+) serves as cofactor.

The protein resides in the cytoplasm. In terms of biological role, single strand-specific metallo-endoribonuclease involved in late-stage 70S ribosome quality control and in maturation of the 3' terminus of the 16S rRNA. This Mycoplasmopsis pulmonis (strain UAB CTIP) (Mycoplasma pulmonis) protein is Endoribonuclease YbeY.